Here is a 123-residue protein sequence, read N- to C-terminus: MLPTENRLRRREDFATAVRRGRRAGRPLLVVHLRSGDTDPHVTGETVPPPRAGFVVSKAVGGAVVRTAVKRRLRHLVRDRLAQLPPGSLVVVRALPGAGDADHAQLARDLDAALQRLLGGGAR.

Belongs to the RnpA family. As to quaternary structure, consists of a catalytic RNA component (M1 or rnpB) and a protein subunit.

It catalyses the reaction Endonucleolytic cleavage of RNA, removing 5'-extranucleotides from tRNA precursor.. Its function is as follows. RNaseP catalyzes the removal of the 5'-leader sequence from pre-tRNA to produce the mature 5'-terminus. It can also cleave other RNA substrates such as 4.5S RNA. The protein component plays an auxiliary but essential role in vivo by binding to the 5'-leader sequence and broadening the substrate specificity of the ribozyme. This chain is Ribonuclease P protein component, found in Streptomyces griseus subsp. griseus (strain JCM 4626 / CBS 651.72 / NBRC 13350 / KCC S-0626 / ISP 5235).